We begin with the raw amino-acid sequence, 333 residues long: 6-phosphogluconolactonase (333 aa).

The protein belongs to the cycloisomerase 2 family.

The enzyme catalyses 6-phospho-D-glucono-1,5-lactone + H2O = 6-phospho-D-gluconate + H(+). Its pathway is carbohydrate degradation; pentose phosphate pathway; D-ribulose 5-phosphate from D-glucose 6-phosphate (oxidative stage): step 2/3. In terms of biological role, catalyzes the hydrolysis of 6-phosphogluconolactone to 6-phosphogluconate. The polypeptide is 6-phosphogluconolactonase (Buchnera aphidicola subsp. Schizaphis graminum (strain Sg)).